The following is an 89-amino-acid chain: Small ribosomal subunit protein uS15 (89 aa).

A compositionally biased stretch (basic and acidic residues) spans Met1–Asp21. The tract at residues Met1 to Gly23 is disordered.

Belongs to the universal ribosomal protein uS15 family. Part of the 30S ribosomal subunit. Forms a bridge to the 50S subunit in the 70S ribosome, contacting the 23S rRNA.

Functionally, one of the primary rRNA binding proteins, it binds directly to 16S rRNA where it helps nucleate assembly of the platform of the 30S subunit by binding and bridging several RNA helices of the 16S rRNA. Its function is as follows. Forms an intersubunit bridge (bridge B4) with the 23S rRNA of the 50S subunit in the ribosome. The chain is Small ribosomal subunit protein uS15 from Desulforamulus reducens (strain ATCC BAA-1160 / DSM 100696 / MI-1) (Desulfotomaculum reducens).